A 389-amino-acid chain; its full sequence is Phospho-N-acetylmuramoyl-pentapeptide-transferase (389 aa).

10 helical membrane passes run 25 to 45 (RAVMATITALGIGLVCGPWVI), 73 to 93 (TMGGVLILIGIAVATLLWGDL), 97 to 117 (FIWIVMLVTFGFGVIGWVDDY), 135 to 155 (FWQSVIGLFAAVYLAFSVSEA), 190 to 210 (ISYPLGVWGFIALTYFVIVGA), 222 to 242 (GLVIMPVVLVGASLGVFAYVM), 258 to 278 (GAGELLIFCSAMGGAGLAFLW), 286 to 306 (VFMGDVGALALGGALGTVAVI), 311 to 331 (IVLFIMGGIFVAETLSVMLQV), and 366 to 386 (QVVVRFWIITLMLCLFGLSTL).

It belongs to the glycosyltransferase 4 family. MraY subfamily. Mg(2+) serves as cofactor.

It is found in the cell inner membrane. The enzyme catalyses UDP-N-acetyl-alpha-D-muramoyl-L-alanyl-gamma-D-glutamyl-meso-2,6-diaminopimeloyl-D-alanyl-D-alanine + di-trans,octa-cis-undecaprenyl phosphate = di-trans,octa-cis-undecaprenyl diphospho-N-acetyl-alpha-D-muramoyl-L-alanyl-D-glutamyl-meso-2,6-diaminopimeloyl-D-alanyl-D-alanine + UMP. It participates in cell wall biogenesis; peptidoglycan biosynthesis. Functionally, catalyzes the initial step of the lipid cycle reactions in the biosynthesis of the cell wall peptidoglycan: transfers peptidoglycan precursor phospho-MurNAc-pentapeptide from UDP-MurNAc-pentapeptide onto the lipid carrier undecaprenyl phosphate, yielding undecaprenyl-pyrophosphoryl-MurNAc-pentapeptide, known as lipid I. The sequence is that of Phospho-N-acetylmuramoyl-pentapeptide-transferase from Burkholderia multivorans (strain ATCC 17616 / 249).